Here is a 217-residue protein sequence, read N- to C-terminus: MTLLSINYEKFKYIEVPELLSKLGVVFMRGYVVGLVLALMLVTAPAMAEDFSMNGTEFAAAFIKNTVSNLDLGAKFLHLLYEVNDTDTNSNLFQNLWGLVYGGVLVAGWNNQVTAEVLETLADSDNLTSQRTNISESIRMMATNTSVVFGDTEGSQGLAALMKYQVKALQNTSITTTNSTGVEVPLVEAYAEALANTITDNVKFMMELFKAIPNALT.

The chain crosses the membrane as a helical span at residues Val26 to Ala48.

It is found in the membrane. This is an uncharacterized protein from Archaeoglobus fulgidus (strain ATCC 49558 / DSM 4304 / JCM 9628 / NBRC 100126 / VC-16).